Consider the following 332-residue polypeptide: Phosphate acyltransferase (332 aa).

It belongs to the PlsX family. As to quaternary structure, homodimer. Probably interacts with PlsY.

The protein localises to the cytoplasm. It catalyses the reaction a fatty acyl-[ACP] + phosphate = an acyl phosphate + holo-[ACP]. It functions in the pathway lipid metabolism; phospholipid metabolism. Its function is as follows. Catalyzes the reversible formation of acyl-phosphate (acyl-PO(4)) from acyl-[acyl-carrier-protein] (acyl-ACP). This enzyme utilizes acyl-ACP as fatty acyl donor, but not acyl-CoA. The chain is Phosphate acyltransferase from Nitratiruptor sp. (strain SB155-2).